Reading from the N-terminus, the 404-residue chain is Cytoplasmic tRNA 2-thiolation protein 2 (404 aa).

The protein belongs to the CTU2/NCS2 family.

It is found in the cytoplasm. Its pathway is tRNA modification; 5-methoxycarbonylmethyl-2-thiouridine-tRNA biosynthesis. Functionally, plays a central role in 2-thiolation of mcm(5)S(2)U at tRNA wobble positions of tRNA(Lys), tRNA(Glu) and tRNA(Gln). May act by forming a heterodimer with NCS6/CTU1 that ligates sulfur from thiocarboxylated URM1 onto the uridine of tRNAs at wobble position. This is Cytoplasmic tRNA 2-thiolation protein 2 from Drosophila erecta (Fruit fly).